A 1122-amino-acid polypeptide reads, in one-letter code: Histone deacetylase 5 (1122 aa).

Residues 1 to 24 (MNSPNESDGMSGREPSLEILPRTS) form a disordered region. A Glycyl lysine isopeptide (Lys-Gly) (interchain with G-Cter in SUMO2) cross-link involves residue lysine 35. Disordered regions lie at residues 41–60 (AMPSSMGGGGGGSPSPVELR) and 196–281 (KEPT…SSPL). Positions 247–258 (DSRDDFPLRKTA) are enriched in basic and acidic residues. Serine 259 bears the Phosphoserine; by AMPK, CaMK1, SIK1 and PKD/PRKD1 mark. Basic and acidic residues predominate over residues 272–281 (KVAERRSSPL). At threonine 292 the chain carries Phosphothreonine; by PKC. Disordered regions lie at residues 302-343 (GAGP…NIPT) and 481-504 (MRTVGKLPRHRPLSRTQSSPLPQS). The span at 312-327 (NSAPGSGPSSPNSSHS) shows a compositional bias: low complexity. The segment covering 328–340 (TIAENGFTGSVPN) has biased composition (polar residues). Positions 494-504 (SRTQSSPLPQS) are enriched in low complexity. Position 498 is a phosphoserine; by AMPK, CaMK1, SIK1 and PKD/PRKD1 (serine 498). At lysine 533 the chain carries N6-acetyllysine. Positions 536–625 (TKTGELPRQP…GPDLEEPGAG (90 aa)) are disordered. The span at 581 to 621 (STQEDLEEEDEEDDGEEEEDCIQVKDEEGESGAEEGPDLEE) shows a compositional bias: acidic residues. 2 positions are modified to phosphoserine: serine 611 and serine 661. A histone deacetylase region spans residues 684–1028 (GVVYDTFMLK…VSALLSVELQ (345 aa)). The Zn(2+) site is built by cysteine 696, cysteine 698, histidine 704, and cysteine 781. The active site involves histidine 833. The Nuclear export signal motif lies at 1081 to 1122 (EEAETVSAMALLSVGAEQAQAAAAREHSPRPAEEPMEQEPAL). The disordered stretch occupies residues 1097–1122 (EQAQAAAAREHSPRPAEEPMEQEPAL). Positions 1104–1113 (AREHSPRPAE) are enriched in basic and acidic residues. The residue at position 1108 (serine 1108) is a Phosphoserine.

The protein belongs to the histone deacetylase family. HD type 2 subfamily. In terms of assembly, interacts with AHRR, BAHD1, BCOR, HDAC7, HDAC9, CTBP1, MEF2C, NCOR2, NRIP1, PHB2 and a 14-3-3 chaperone protein. Interacts with BCL6, DDIT3/CHOP, GRK5, KDM5B and MYOCD. Interacts with EP300 in the presence of TFAP2C. Interacts with ANKRA2. Interacts with CUL7 (as part of the 3M complex); negatively regulated by ANKRA2. Interacts with ZBTB7B; the interaction allows the recruitment of HDAC4 on CD8 loci for deacetylation and possible inhibition of CD8 genes expression. Interacts with RARA. Post-translationally, phosphorylated by AMPK, CaMK1, SIK1 and PRKD1 at Ser-259 and Ser-498. The phosphorylation is required for the export to the cytoplasm and inhibition. Phosphorylated by the PKC kinases PKN1 and PKN2, impairing nuclear import. Phosphorylated by GRK5, leading to nuclear export of HDAC5 and allowing MEF2-mediated transcription. In terms of processing, ubiquitinated. Polyubiquitination however does not lead to its degradation. Ubiquitous.

Its subcellular location is the nucleus. The protein resides in the cytoplasm. The enzyme catalyses N(6)-acetyl-L-lysyl-[histone] + H2O = L-lysyl-[histone] + acetate. Functionally, responsible for the deacetylation of lysine residues on the N-terminal part of the core histones (H2A, H2B, H3 and H4). Histone deacetylation gives a tag for epigenetic repression and plays an important role in transcriptional regulation, cell cycle progression and developmental events. Histone deacetylases act via the formation of large multiprotein complexes. Involved in muscle maturation by repressing transcription of myocyte enhancer MEF2C. During muscle differentiation, it shuttles into the cytoplasm, allowing the expression of myocyte enhancer factors. Involved in the MTA1-mediated epigenetic regulation of ESR1 expression in breast cancer. Serves as a corepressor of RARA and causes its deacetylation. In association with RARA, plays a role in the repression of microRNA-10a and thereby in the inflammatory response. The protein is Histone deacetylase 5 (HDAC5) of Homo sapiens (Human).